A 684-amino-acid polypeptide reads, in one-letter code: uncharacterized protein (684 aa).

The region spanning leucine 54–valine 239 is the Helicase ATP-binding domain. Threonine 67–serine 74 lines the ATP pocket. Residues aspartate 181–histidine 184 carry the DEVH box motif. One can recognise a Helicase C-terminal domain in the interval leucine 264–phenylalanine 419.

Belongs to the helicase family.

This is an uncharacterized protein from Methanocaldococcus jannaschii (strain ATCC 43067 / DSM 2661 / JAL-1 / JCM 10045 / NBRC 100440) (Methanococcus jannaschii).